Here is a 402-residue protein sequence, read N- to C-terminus: Flavohemoprotein (402 aa).

Positions 1 to 136 (MLSAKTIEIV…IADAFISIEA (136 aa)) constitute a Globin domain. H85 provides a ligand contact to heme b. Active-site charge relay system residues include Y95 and E135. Positions 147-402 (GGWKDFRNFV…EFFGPATSLQ (256 aa)) are reductase. Residues 150–260 (KDFRNFVIVK…SAPAGDFVLN (111 aa)) enclose the FAD-binding FR-type domain. FAD contacts are provided by residues Y188 and 204–207 (RQYS). Position 273–278 (273–278 (GVGITP)) interacts with NADP(+). 394–397 (FFGP) is a binding site for FAD.

This sequence belongs to the globin family. Two-domain flavohemoproteins subfamily. The protein in the C-terminal section; belongs to the flavoprotein pyridine nucleotide cytochrome reductase family. The cofactor is heme b. It depends on FAD as a cofactor.

The catalysed reaction is 2 nitric oxide + NADPH + 2 O2 = 2 nitrate + NADP(+) + H(+). It carries out the reaction 2 nitric oxide + NADH + 2 O2 = 2 nitrate + NAD(+) + H(+). Is involved in NO detoxification in an aerobic process, termed nitric oxide dioxygenase (NOD) reaction that utilizes O(2) and NAD(P)H to convert NO to nitrate, which protects the bacterium from various noxious nitrogen compounds. Therefore, plays a central role in the inducible response to nitrosative stress. This is Flavohemoprotein from Bacillus cereus (strain ATCC 14579 / DSM 31 / CCUG 7414 / JCM 2152 / NBRC 15305 / NCIMB 9373 / NCTC 2599 / NRRL B-3711).